The chain runs to 188 residues: MFILGSGSPRRKELLAQIGVVPDDIRPPDINETPLKGELPRPYCARMAREKACAVDALPDDVVLCADTTVALGRRILGKPEDATEAAAFLKLLSGRRHRVITAIAVRVAERVWEKDVVSIVRMKSLSQAEIQSYIDSEDWRGKAGGYGIQGPAAALIPWISGSYTGIVGLPLAETAGLLQAAGYRGAS.

The Proton acceptor role is filled by D67.

This sequence belongs to the Maf family. YhdE subfamily. The cofactor is a divalent metal cation.

Its subcellular location is the cytoplasm. The catalysed reaction is dTTP + H2O = dTMP + diphosphate + H(+). It catalyses the reaction UTP + H2O = UMP + diphosphate + H(+). In terms of biological role, nucleoside triphosphate pyrophosphatase that hydrolyzes dTTP and UTP. May have a dual role in cell division arrest and in preventing the incorporation of modified nucleotides into cellular nucleic acids. The polypeptide is dTTP/UTP pyrophosphatase (Roseobacter denitrificans (strain ATCC 33942 / OCh 114) (Erythrobacter sp. (strain OCh 114))).